The sequence spans 1083 residues: Rho GTPase-activating protein 39 (1083 aa).

Ser2 bears the N-acetylserine mark. WW domains lie at 25–58 (NTRL…PPAG) and 63–97 (RTSE…RPQG). The interval 110–154 (KQNTESPRASAESSPGRGSSVSREGSTSSSLEPEPDTEKAQELPA) is disordered. The segment covering 117 to 141 (RASAESSPGRGSSVSREGSTSSSLE) has biased composition (low complexity). A Phosphoserine modification is found at Ser169. Residues 226–369 (AAQGNGYAPD…NKQGPPSPCQ (144 aa)) form a disordered region. Positions 245–256 (PSGSQHSPSLQT) are enriched in polar residues. A compositionally biased stretch (basic and acidic residues) spans 268-280 (PERRPSPFLKRAE). 5 positions are modified to phosphoserine: Ser286, Ser384, Ser388, Ser406, and Ser407. 2 disordered regions span residues 405–545 (GSSP…EAEG) and 570–599 (MKQR…PGPV). Polar residues-rich tracts occupy residues 474-488 (SWSS…TGYS) and 573-582 (RSSWDSQQDG). Phosphoserine is present on residues Ser604, Ser690, Ser715, and Ser726. The MyTH4 domain maps to 722–879 (WSSESIKKPM…PNVEEIRHAK (158 aa)). The 189-residue stretch at 890–1078 (SALQEVMGMQ…VLIQHLDTSF (189 aa)) folds into the Rho-GAP domain.

The protein localises to the nucleus. In Homo sapiens (Human), this protein is Rho GTPase-activating protein 39 (ARHGAP39).